The sequence spans 370 residues: Dual-specificity RNA methyltransferase RlmN (370 aa).

Residue glutamate 93 is the Proton acceptor of the active site. Residues 99–337 (EEGRGTLCVS…VTTVRKTRGD (239 aa)) form the Radical SAM core domain. Cysteine 106 and cysteine 343 form a disulfide bridge. 3 residues coordinate [4Fe-4S] cluster: cysteine 113, cysteine 117, and cysteine 120. Residues 167 to 168 (GE), serine 199, 221 to 223 (SLH), and asparagine 300 contribute to the S-adenosyl-L-methionine site. The S-methylcysteine intermediate role is filled by cysteine 343.

The protein belongs to the radical SAM superfamily. RlmN family. [4Fe-4S] cluster serves as cofactor.

The protein resides in the cytoplasm. The catalysed reaction is adenosine(2503) in 23S rRNA + 2 reduced [2Fe-2S]-[ferredoxin] + 2 S-adenosyl-L-methionine = 2-methyladenosine(2503) in 23S rRNA + 5'-deoxyadenosine + L-methionine + 2 oxidized [2Fe-2S]-[ferredoxin] + S-adenosyl-L-homocysteine. It carries out the reaction adenosine(37) in tRNA + 2 reduced [2Fe-2S]-[ferredoxin] + 2 S-adenosyl-L-methionine = 2-methyladenosine(37) in tRNA + 5'-deoxyadenosine + L-methionine + 2 oxidized [2Fe-2S]-[ferredoxin] + S-adenosyl-L-homocysteine. In terms of biological role, specifically methylates position 2 of adenine 2503 in 23S rRNA and position 2 of adenine 37 in tRNAs. m2A2503 modification seems to play a crucial role in the proofreading step occurring at the peptidyl transferase center and thus would serve to optimize ribosomal fidelity. In Francisella tularensis subsp. mediasiatica (strain FSC147), this protein is Dual-specificity RNA methyltransferase RlmN.